An 81-amino-acid polypeptide reads, in one-letter code: Protein I5 homolog (81 aa).

The next 2 helical transmembrane spans lie at 8–28 (LITI…FSLV) and 53–73 (MEIF…AAYI).

This sequence belongs to the Chordopoxvirinae I5 family.

It localises to the virion membrane. This Vertebrata (FPV) protein is Protein I5 homolog.